The following is a 543-amino-acid chain: uncharacterized protein (543 aa).

6 helical membrane passes run 47 to 67, 79 to 99, 126 to 146, 176 to 196, 198 to 218, and 249 to 269; these read FSLL…PSLV, GGMV…AFAL, AFLS…GFAS, IYVA…KFLA, FSSF…ISLA, and FILC…CATI. N-linked (GlcNAc...) asparagine glycosylation is present at asparagine 275. The next 3 helical transmembrane spans lie at 282-302, 335-355, and 384-404; these read IAII…MITI, AVGV…ALCL, and IPLN…LLML. The N-linked (GlcNAc...) asparagine glycan is linked to asparagine 406. The next 3 helical transmembrane spans lie at 410–430, 452–472, and 480–500; these read ISSI…LPLV, ISIV…FPSY, and MNWA…YYYL. An N-linked (GlcNAc...) asparagine glycan is attached at asparagine 519.

This sequence belongs to the amino acid-polyamine-organocation (APC) superfamily.

The protein resides in the membrane. This is an uncharacterized protein from Schizosaccharomyces pombe (strain 972 / ATCC 24843) (Fission yeast).